We begin with the raw amino-acid sequence, 436 residues long: Drebrin-like protein (436 aa).

The 132-residue stretch at 2–133 (AVNLSRNGPA…EPECIMEKVA (132 aa)) folds into the ADF-H domain. Thr-26 is modified (phosphothreonine). A Phosphoserine modification is found at Ser-160. Position 176 is an N6-acetyllysine (Lys-176). Positions 178–232 (NFWAKAEKEEENRRLEEKRRAEEEKQRLEEERRERELQEAARREQRYQEQHRSAG) form a coiled coil. 2 stretches are compositionally biased toward basic and acidic residues: residues 185–229 (KEEE…EQHR) and 264–275 (HPREIFKQKERA). The tract at residues 185-371 (KEEENRRLEE…GSGHIDNYMQ (187 aa)) is disordered. Positions 276–286 (MSTTSVSSSQP) are enriched in polar residues. 4 positions are modified to phosphoserine: Ser-277, Ser-280, Ser-283, and Ser-291. Lys-296 bears the N6-acetyllysine mark. The residue at position 299 (Thr-299) is a Phosphothreonine. Residue Ser-311 is modified to Phosphoserine. Phosphotyrosine occurs at positions 340 and 350. Residues 377–436 (GQGLCARALYDYQAADDTEISFDPENLITGIEVIDEGWWRGYGPDGHFGMFPANYVELIE) enclose the SH3 domain.

This sequence belongs to the ABP1 family. Interacts with FGD1, MAP4K1 and PRAM1. Interacts with ANKRD54. Interacts with WASL and WIPF1. Interacts with SHANK2 and SHANK3. Interacts with both COBL and PACSIN1. Interacts with DNM1 and SYN1. In terms of tissue distribution, detected in brain (at protein level). Widely expressed in brain with highest levels in hippocampus and cerebral cortex. Located primarily in dendrites and, in moderate amounts, in cell bodies. Isoform 1 and isoform 3 are the predominant isoforms in brain.

It is found in the cytoplasm. The protein localises to the cytoskeleton. Its subcellular location is the cell projection. It localises to the lamellipodium. The protein resides in the ruffle. It is found in the cell cortex. The protein localises to the cytosol. Its subcellular location is the cell membrane. It localises to the synapse. The protein resides in the perikaryon. It is found in the neuron projection. The protein localises to the dendrite. Its subcellular location is the postsynaptic density. It localises to the golgi apparatus membrane. The protein resides in the cytoplasmic vesicle. It is found in the clathrin-coated vesicle membrane. The protein localises to the podosome. Its subcellular location is the early endosome. In terms of biological role, adapter protein that binds F-actin and DNM1, and thereby plays a role in receptor-mediated endocytosis. Required for the formation of organized podosome rosettes. May act as a common effector of antigen receptor-signaling pathways in leukocytes. Acts as a key component of the immunological synapse that regulates T-cell activation by bridging TCRs and the actin cytoskeleton to gene activation and endocytic processes. Plays a role in the reorganization of the actin cytoskeleton, formation of cell projections, such as neurites, in neuron morphogenesis and synapse formation via its interaction with WASL and COBL. Does not bind G-actin and promote actin polymerization by itself. The protein is Drebrin-like protein of Rattus norvegicus (Rat).